Here is a 363-residue protein sequence, read N- to C-terminus: Ly6/PLAUR domain-containing protein 3 (363 aa).

Positions Met-1 to Ala-32 are cleaved as a signal peptide. The region spanning Cys-35–Pro-128 is the UPAR/Ly6 1 domain. Asn-120, Asn-131, Asn-178, and Asn-185 each carry an N-linked (GlcNAc...) asparagine glycan. A UPAR/Ly6 2 domain is found at Cys-142–Asn-224. Residues Pro-238–Thr-248 are compositionally biased toward pro residues. 2 disordered regions span residues Pro-238–His-287 and Leu-301–Gln-336. A compositionally biased stretch (low complexity) spans Ala-249 to Thr-278. The span at Gly-304 to Ala-318 shows a compositional bias: gly residues. The segment covering His-320–Pro-330 has biased composition (basic and acidic residues). Residue Ser-343 is the site of GPI-anchor amidated serine attachment. Positions Gly-344–Leu-363 are cleaved as a propeptide — removed in mature form.

Binds laminin-1 and laminin-5. Interacts with LGALS3. Interacts with AGR2 and AGR3.

It localises to the cell membrane. Supports cell migration. May be involved in tumor progression. In Mus musculus (Mouse), this protein is Ly6/PLAUR domain-containing protein 3 (Lypd3).